The sequence spans 378 residues: Small ribosomal subunit protein bS1 (378 aa).

5 consecutive S1 motif domains span residues 1 to 66 (ETVT…VSRR), 87 to 155 (GMEV…LGLK), 172 to 242 (GTKL…LGLK), 259 to 329 (GDRV…LGVK), and 346 to 378 (GAIV…ASEA).

The protein belongs to the bacterial ribosomal protein bS1 family.

Binds mRNA; thus facilitating recognition of the initiation point. It is needed to translate mRNA with a short Shine-Dalgarno (SD) purine-rich sequence. The protein is Small ribosomal subunit protein bS1 (rpsA) of Providencia sp.